The following is a 207-amino-acid chain: Glycerol-3-phosphate acyltransferase (207 aa).

6 helical membrane passes run 8 to 28 (NIVF…LILA), 64 to 84 (LGIA…LVGI), 92 to 112 (TLWA…YLGL), 122 to 142 (LGVY…VWIV), 154 to 174 (SLLG…GLGI), and 176 to 196 (SNIP…PNIV).

This sequence belongs to the PlsY family. As to quaternary structure, probably interacts with PlsX.

The protein localises to the cell inner membrane. The enzyme catalyses an acyl phosphate + sn-glycerol 3-phosphate = a 1-acyl-sn-glycero-3-phosphate + phosphate. It functions in the pathway lipid metabolism; phospholipid metabolism. In terms of biological role, catalyzes the transfer of an acyl group from acyl-phosphate (acyl-PO(4)) to glycerol-3-phosphate (G3P) to form lysophosphatidic acid (LPA). This enzyme utilizes acyl-phosphate as fatty acyl donor, but not acyl-CoA or acyl-ACP. This is Glycerol-3-phosphate acyltransferase from Aliarcobacter butzleri (strain RM4018) (Arcobacter butzleri).